An 82-amino-acid polypeptide reads, in one-letter code: Small ribosomal subunit protein uS17c (82 aa).

It belongs to the universal ribosomal protein uS17 family. As to quaternary structure, part of the 30S ribosomal subunit.

The protein localises to the plastid. The protein resides in the chloroplast. One of the primary rRNA binding proteins, it binds specifically to the 5'-end of 16S ribosomal RNA. The chain is Small ribosomal subunit protein uS17c (rps17) from Cyanidioschyzon merolae (strain NIES-3377 / 10D) (Unicellular red alga).